The primary structure comprises 153 residues: DNA gyrase inhibitor (153 aa).

Belongs to the DNA gyrase inhibitor family. In terms of assembly, interacts with DNA gyrase.

The protein resides in the cytoplasm. Its function is as follows. Inhibits the supercoiling activity of DNA gyrase. Acts by inhibiting DNA gyrase at an early step, prior to (or at the step of) binding of DNA by the gyrase. It protects cells against toxins that target DNA gyrase, by inhibiting activity of these toxins and reducing the formation of lethal double-strand breaks in the cell. This Pantoea sp. (strain At-9b) protein is DNA gyrase inhibitor.